The chain runs to 393 residues: Rubredoxin-NAD(+) reductase (393 aa).

FAD is bound by residues 9–12 (SGMA), 33–34 (CA), K42, V80, E162, D282, V294, and K325.

This sequence belongs to the FAD-dependent oxidoreductase family. As to quaternary structure, homodimer. FAD serves as cofactor.

It localises to the cytoplasm. The enzyme catalyses 2 reduced [rubredoxin] + NAD(+) + H(+) = 2 oxidized [rubredoxin] + NADH. It functions in the pathway hydrocarbon metabolism; alkane degradation. In terms of biological role, involved in the hydrocarbon hydroxylating system, which transfers electrons from NADH to rubredoxin reductase and then through rubredoxin to alkane 1 monooxygenase. This chain is Rubredoxin-NAD(+) reductase (rubB), found in Acinetobacter baylyi (strain ATCC 33305 / BD413 / ADP1).